The sequence spans 91 residues: Large ribosomal subunit protein uL29 (91 aa).

Residues 67-91 (AAPLAESSAPAKTKSRARKSKKEAL) are disordered. Basic residues predominate over residues 79-91 (TKSRARKSKKEAL).

The protein belongs to the universal ribosomal protein uL29 family.

The protein is Large ribosomal subunit protein uL29 of Acidobacterium capsulatum (strain ATCC 51196 / DSM 11244 / BCRC 80197 / JCM 7670 / NBRC 15755 / NCIMB 13165 / 161).